The chain runs to 83 residues: Small ribosomal subunit protein uS17c (83 aa).

The protein belongs to the universal ribosomal protein uS17 family. In terms of assembly, part of the 30S ribosomal subunit.

It is found in the plastid. The protein resides in the chloroplast. Its function is as follows. One of the primary rRNA binding proteins, it binds specifically to the 5'-end of 16S ribosomal RNA. This chain is Small ribosomal subunit protein uS17c (rps17), found in Pyropia yezoensis (Susabi-nori).